Reading from the N-terminus, the 61-residue chain is Small ribosomal subunit protein eS31 (61 aa).

4 residues coordinate Zn(2+): C22, C25, C38, and C41. The segment at 22-41 (CPRCGSFMAEHKDRYHCGKC) adopts a C4-type zinc-finger fold.

The protein belongs to the eukaryotic ribosomal protein eS31 family. In terms of assembly, part of the 30S ribosomal subunit. Requires Zn(2+) as cofactor.

This is Small ribosomal subunit protein eS31 from Nanoarchaeum equitans (strain Kin4-M).